The sequence spans 306 residues: Acetylglutamate kinase (306 aa).

Substrate-binding positions include 79–80 (GG), R101, and N203.

This sequence belongs to the acetylglutamate kinase family. ArgB subfamily.

It localises to the cytoplasm. It catalyses the reaction N-acetyl-L-glutamate + ATP = N-acetyl-L-glutamyl 5-phosphate + ADP. It participates in amino-acid biosynthesis; L-arginine biosynthesis; N(2)-acetyl-L-ornithine from L-glutamate: step 2/4. Its function is as follows. Catalyzes the ATP-dependent phosphorylation of N-acetyl-L-glutamate. This Polaromonas naphthalenivorans (strain CJ2) protein is Acetylglutamate kinase.